A 98-amino-acid chain; its full sequence is Protein translation factor SUI1 homolog (98 aa).

This sequence belongs to the SUI1 family.

The sequence is that of Protein translation factor SUI1 homolog from Thermococcus kodakarensis (strain ATCC BAA-918 / JCM 12380 / KOD1) (Pyrococcus kodakaraensis (strain KOD1)).